The chain runs to 502 residues: UTP--glucose-1-phosphate uridylyltransferase 2 (502 aa).

The interval 1–20 (MMKPDLNSPLPQSPQLQAFG) is disordered. Over residues 9–20 (PLPQSPQLQAFG) the composition is skewed to polar residues. Residues 114 to 117 (LNGG), lysine 128, glutamine 191, and glycine 220 each bind UTP. Substrate is bound at residue 116 to 117 (GG). Residues histidine 221 and 249-251 (NVD) each bind substrate. UTP-binding residues include aspartate 251 and lysine 390.

This sequence belongs to the UDPGP type 1 family.

It carries out the reaction alpha-D-glucose 1-phosphate + UTP + H(+) = UDP-alpha-D-glucose + diphosphate. Its function is as follows. Plays a central role as a glucosyl donor in cellular metabolic pathways. This Dictyostelium discoideum (Social amoeba) protein is UTP--glucose-1-phosphate uridylyltransferase 2 (ugpB).